A 309-amino-acid polypeptide reads, in one-letter code: MVRLTLDLIARNSNLKPRKEETISQCLKKITHINFSDKNIDAIEDLSLCKNLSVLYLYDNCISQITNLNYATNLTHLYLQNNCISCIENLRSLKKLEKLYLGGNYIAVIEGLEGLGELRELHVENQRLPLGEKLLFDPRTLHSLAKSLCILNISNNNIDDITDLELLENLNQLIAVDNQLLHVKDLEFLLNKLMKLWKIDLNGNPVCLKPKYRDRLILVSKSLEFLDGKEIKNIERQFLMNWKASKDAKKISKKRSSKNEDASNSLISNFKTMHHIVPVYYPQVGKPKLAFFSEIQRYPVNANASPESS.

7 LRR repeats span residues 29–50 (KITHINFSDKNIDAIEDLSLCK), 51–72 (NLSVLYLYDNCISQITNLNYAT), 73–94 (NLTHLYLQNNCISCIENLRSLK), 95–116 (KLEKLYLGGNYIAVIEGLEGLG), 117–138 (ELRELHVENQRLPLGEKLLFDP), 147–168 (SLCILNISNNNIDDITDLELLE), and 169–190 (NLNQLIAVDNQLLHVKDLEFLL). An LRRCT domain is found at 204–242 (NPVCLKPKYRDRLILVSKSLEFLDGKEIKNIERQFLMNW).

Interacts with PPP1CC isoform gamma-2; the interaction is direct. Interacts with actin, dynein, KIF5B, KIFC1 and tubulin. Associates with microtubules. Phosphorylated; in the testis.

The protein localises to the cytoplasm. The protein resides in the cytoskeleton. It localises to the microtubule organizing center. Its subcellular location is the centrosome. Regulates phosphatase activity of protein phosphatase 1 (PP1) complexes in the testis. The polypeptide is Protein phosphatase 1 regulatory subunit 42 (Homo sapiens (Human)).